The primary structure comprises 256 residues: Hydroxyacylglutathione hydrolase (256 aa).

Residues histidine 55, histidine 57, aspartate 59, histidine 60, histidine 113, aspartate 132, and histidine 170 each coordinate Zn(2+).

The protein belongs to the metallo-beta-lactamase superfamily. Glyoxalase II family. Monomer. Zn(2+) serves as cofactor.

It carries out the reaction an S-(2-hydroxyacyl)glutathione + H2O = a 2-hydroxy carboxylate + glutathione + H(+). It participates in secondary metabolite metabolism; methylglyoxal degradation; (R)-lactate from methylglyoxal: step 2/2. Functionally, thiolesterase that catalyzes the hydrolysis of S-D-lactoyl-glutathione to form glutathione and D-lactic acid. This Methylococcus capsulatus (strain ATCC 33009 / NCIMB 11132 / Bath) protein is Hydroxyacylglutathione hydrolase.